A 678-amino-acid polypeptide reads, in one-letter code: UvrABC system protein C (678 aa).

Residues 16–95 (VEPGVYRFRD…IKEFDPRFNI (80 aa)) enclose the GIY-YIG domain. One can recognise a UVR domain in the interval 208–243 (DRLIREMEQQMTAAAEDLDFERAARLRDNIGAMRRA). Over residues 649 to 667 (EAPPEPGAEAPPDSGAAAA) the composition is skewed to low complexity. The tract at residues 649–678 (EAPPEPGAEAPPDSGAAAAVMGNDQSRVPG) is disordered.

Belongs to the UvrC family. Interacts with UvrB in an incision complex.

Its subcellular location is the cytoplasm. Its function is as follows. The UvrABC repair system catalyzes the recognition and processing of DNA lesions. UvrC both incises the 5' and 3' sides of the lesion. The N-terminal half is responsible for the 3' incision and the C-terminal half is responsible for the 5' incision. This chain is UvrABC system protein C, found in Mycolicibacterium gilvum (strain PYR-GCK) (Mycobacterium gilvum (strain PYR-GCK)).